Consider the following 523-residue polypeptide: 2-isopropylmalate synthase (523 aa).

Residues 5 to 267 form the Pyruvate carboxyltransferase domain; the sequence is VIIFDTTLRD…HTNINHHEIW (263 aa). Positions 14, 202, 204, and 238 each coordinate Mn(2+). The segment at 392-523 is regulatory domain; the sequence is RLDYFSVQSG…QNKENNKETV (132 aa).

It belongs to the alpha-IPM synthase/homocitrate synthase family. LeuA type 1 subfamily. In terms of assembly, homodimer. Mn(2+) serves as cofactor.

The protein resides in the cytoplasm. It catalyses the reaction 3-methyl-2-oxobutanoate + acetyl-CoA + H2O = (2S)-2-isopropylmalate + CoA + H(+). It functions in the pathway amino-acid biosynthesis; L-leucine biosynthesis; L-leucine from 3-methyl-2-oxobutanoate: step 1/4. In terms of biological role, catalyzes the condensation of the acetyl group of acetyl-CoA with 3-methyl-2-oxobutanoate (2-ketoisovalerate) to form 3-carboxy-3-hydroxy-4-methylpentanoate (2-isopropylmalate). The polypeptide is 2-isopropylmalate synthase (Salmonella typhi).